Reading from the N-terminus, the 589-residue chain is PTS system mannitol-specific EIICB component (589 aa).

Over 1–25 (MERKSSLKVRVQKLGTSLSNMVMPN) the chain is Cytoplasmic. The region spanning 14–347 (LGTSLSNMVM…ILKSDNSDDD (334 aa)) is the PTS EIIC type-2 domain. The chain crosses the membrane as a helical span at residues 26–47 (IGAFIAWGVAASLFIATGYLPN). Topologically, residues 48–51 (KALD) are extracellular. The chain crosses the membrane as a helical span at residues 52–73 (TNVVGPMLKYVLPLLIGYTGGY). Topologically, residues 74–136 (NIHKQRGGVI…TGFEMLVNNF (63 aa)) are cytoplasmic. The helical transmembrane segment at 137–158 (SLGLIGFALMVLAFFVIGPVVA) threads the bilayer. The Extracellular portion of the chain corresponds to 159 to 167 (QLTEWVGIG). Residues 168–188 (VEAIVKVHLLPLANLIIEPAK) form a helical membrane-spanning segment. Residues 189–275 (ILFLNNALNH…VMMKPAMFLA (87 aa)) lie on the Cytoplasmic side of the membrane. The helical transmembrane segment at 276-295 (VIAGGLTGTFTFQTLGAGLT) threads the bilayer. Over 296-317 (APASPGSIIAIMGMSPKGWGPH) the chain is Extracellular. The chain crosses the membrane as a helical span at residues 318–339 (LVVLAGVFAAAVASFLVASIIL). Topologically, residues 340–589 (KSDNSDDDSL…YDKLVARMHK (250 aa)) are cytoplasmic. The region spanning 383–478 (HQIIFACDAG…SLTNGKASGS (96 aa)) is the PTS EIIB type-2 domain. C389 acts as the Phosphocysteine intermediate; for EIIB activity in catalysis. Position 389 is a phosphocysteine; by EIIA (C389).

Homodimer.

It is found in the cell membrane. It catalyses the reaction D-mannitol(out) + N(pros)-phospho-L-histidyl-[protein] = D-mannitol 1-phosphate(in) + L-histidyl-[protein]. In terms of biological role, the phosphoenolpyruvate-dependent sugar phosphotransferase system (sugar PTS), a major carbohydrate active transport system, catalyzes the phosphorylation of incoming sugar substrates concomitantly with their translocation across the cell membrane. The enzyme II CmtAB PTS system is involved in D-mannitol transport. This chain is PTS system mannitol-specific EIICB component, found in Streptococcus mutans serotype c (strain ATCC 700610 / UA159).